A 116-amino-acid polypeptide reads, in one-letter code: Vesicle-associated membrane protein 2 (116 aa).

A disordered region spans residues 1–33 (MSATAATAPPAAPAGEGGPPAPPPNLTSNRRLQ). Ser2 is modified (N-acetylserine). The Cytoplasmic portion of the chain corresponds to 2-94 (SATAATAPPA…KRKYWWKNLK (93 aa)). The 61-residue stretch at 31–91 (RLQQTQAQVD…AKLKRKYWWK (61 aa)) folds into the v-SNARE coiled-coil homology domain. A required for interaction with SEPT8 region spans residues 92–116 (NLKMMIILGVICAIILIIIIVYFST). A helical; Anchor for type IV membrane protein transmembrane segment spans residues 95–114 (MMIILGVICAIILIIIIVYF). Over 115–116 (ST) the chain is Vesicular.

It belongs to the synaptobrevin family. In terms of assembly, part of the SNARE core complex containing SNAP25, VAMP2 and STX1A; this complex constitutes the basic catalytic machinery of the complex neurotransmitter release apparatus. Recruited to the SNARE complex following binding of the SNARE complex component STX1A to STXBP1. This complex binds to CPLX1. Interacts with POPDC1 and STX4. Interacts with VAPA and VAPB. Interacts with WDFY2, PRKCZ and PRKCI. Forms a complex with WDFY2 and PRKCZ. Interacts (via N-terminus) with KCNB1 (via N-terminus and C-terminus); stimulates the channel inactivation rate of KCNB1. Interacts with SEPT8; the interaction inhibits interaction of VAMP2 with SYP. Interacts with SYP; the interaction is inhibited by interaction with SEPT8. Interacts with PICALM. Interacts with alpha-synuclein/SNCA. Interacts with STX3. Post-translationally, phosphorylated by PRKCZ in vitro and this phosphorylation is increased in the presence of WDFY2. (Microbial infection) Targeted and hydrolyzed by C.botulinum neurotoxin type B (BoNT/B, botB) which hydrolyzes the 76-Gln-|-Phe-77 bond and probably inhibits neurotransmitter release. In terms of processing, (Microbial infection) Targeted and hydrolyzed by C.botulinum neurotoxin type D (BoNT/D, botD) which probably hydrolyzes the 59-Lys-|-Leu-60 bond and inhibits neurotransmitter release. Note that humans are not known to be infected by C.botulinum type D. Post-translationally, (Microbial infection) Targeted and hydrolyzed by C.botulinum neurotoxin type F (BoNT/F, botF) which hydrolyzes the 58-Gln-|-Lys-59 bond and probably inhibits neurotransmitter release. (Microbial infection) Targeted and hydrolyzed by C.tetani tetanus toxin (tetX) which hydrolyzes the 76-Gln-|-Phe-77 bond and probably inhibits neurotransmitter release. As to expression, nervous system and skeletal muscle.

Its subcellular location is the cytoplasmic vesicle. It localises to the secretory vesicle. The protein resides in the synaptic vesicle membrane. The protein localises to the cell membrane. Functionally, involved in the targeting and/or fusion of transport vesicles to their target membrane. Major SNARE protein of synaptic vesicles which mediates fusion of synaptic vesicles to release neurotransmitters. Essential for fast vesicular exocytosis and activity-dependent neurotransmitter release as well as fast endocytosis that mediates rapid reuse of synaptic vesicles. Modulates the gating characteristics of the delayed rectifier voltage-dependent potassium channel KCNB1. The chain is Vesicle-associated membrane protein 2 from Homo sapiens (Human).